The primary structure comprises 215 residues: Large ribosomal subunit protein uL4 (215 aa).

Residues 46-72 are disordered; sequence TAKSKNRAEVSGGGRKPWAQKGGGRAR. Residues 56–71 are compositionally biased toward gly residues; it reads SGGGRKPWAQKGGGRA.

It belongs to the universal ribosomal protein uL4 family. Part of the 50S ribosomal subunit.

Its function is as follows. One of the primary rRNA binding proteins, this protein initially binds near the 5'-end of the 23S rRNA. It is important during the early stages of 50S assembly. It makes multiple contacts with different domains of the 23S rRNA in the assembled 50S subunit and ribosome. Forms part of the polypeptide exit tunnel. This chain is Large ribosomal subunit protein uL4, found in Helicobacter pylori (strain G27).